A 92-amino-acid chain; its full sequence is Small ribosomal subunit protein uS19c (92 aa).

This sequence belongs to the universal ribosomal protein uS19 family.

It localises to the plastid. The protein localises to the chloroplast. Functionally, protein S19 forms a complex with S13 that binds strongly to the 16S ribosomal RNA. The protein is Small ribosomal subunit protein uS19c of Nephroselmis olivacea (Green alga).